The following is a 629-amino-acid chain: Acetylcholinesterase (629 aa).

The first 38 residues, Met-1–His-38, serve as a signal peptide directing secretion. Cys-103 and Cys-130 are joined by a disulfide. Asn-125 carries an N-linked (GlcNAc...) asparagine glycan. The Acyl-ester intermediate role is filled by Ser-253. A disulfide bond links Cys-307 and Cys-322. Asn-308 is a glycosylation site (N-linked (GlcNAc...) asparagine). The active-site Charge relay system is Glu-382. N-linked (GlcNAc...) asparagine glycosylation is present at Asn-418. A disulfide bridge connects residues Cys-458 and Cys-574. His-496 acts as the Charge relay system in catalysis. Asn-509 carries N-linked (GlcNAc...) asparagine glycosylation. Ser-605 is lipidated: GPI-anchor amidated serine. Residues Ser-606–Leu-629 constitute a propeptide, removed in mature form.

This sequence belongs to the type-B carboxylesterase/lipase family. As to quaternary structure, homodimer; disulfide-linked. Post-translationally, the N-terminus is blocked.

The protein localises to the synapse. The protein resides in the cell membrane. It catalyses the reaction acetylcholine + H2O = choline + acetate + H(+). Rapidly hydrolyzes choline released into the synapse. The sequence is that of Acetylcholinesterase from Leptinotarsa decemlineata (Colorado potato beetle).